Consider the following 323-residue polypeptide: Aquaporin-4 (323 aa).

Topologically, residues 1–36 (MSDGAAARRWGKCGPPCSRESIMVAFKGVWTQAFWK) are cytoplasmic. Residues C13 and C17 are each lipidated (S-palmitoyl cysteine). Residues 37-57 (AVTAEFLAMLIFVLLSVGSTI) form a helical membrane-spanning segment. Residues 58-69 (NWGGSENPLPVD) lie on the Extracellular side of the membrane. Residues 70 to 89 (MVLISLCFGLSIATMVQCFG) form a helical membrane-spanning segment. At 90 to 93 (HISG) the chain is on the cytoplasmic side. Residues 94-101 (GHINPAVT) constitute an intramembrane region (discontinuously helical). Residues 97 to 99 (NPA) carry the NPA 1 motif. Over 102–115 (VAMVCTRKISIAKS) the chain is Cytoplasmic. A Phosphoserine; by PKG modification is found at S111. Residues 116 to 136 (VFYITAQCLGAIIGAGILYLV) traverse the membrane as a helical segment. Topologically, residues 137-155 (TPPSVVGGLGVTTVHGNLT) are extracellular. N-linked (GlcNAc...) asparagine glycosylation is present at N153. A helical transmembrane segment spans residues 156–176 (AGHGLLVELIITFQLVFTIFA). Residues 177–184 (SCDSKRTD) lie on the Cytoplasmic side of the membrane. Phosphoserine; by PKC is present on S180. The chain crosses the membrane as a helical span at residues 185–205 (VTGSVALAIGFSVAIGHLFAI). Residues 206–208 (NYT) lie on the Extracellular side of the membrane. Positions 209 to 222 (GASMNPARSFGPAV) form an intramembrane region, discontinuously helical. The NPA 2 signature appears at 213-215 (NPA). Over 223 to 231 (IMGNWENHW) the chain is Extracellular. A helical membrane pass occupies residues 232–252 (IYWVGPIIGAVLAGALYEYVF). Residues 253–323 (CPDVELKRRL…DSSGEVLSSV (71 aa)) lie on the Cytoplasmic side of the membrane. Residues S276 and S285 each carry the phosphoserine modification. T289 carries the post-translational modification Phosphothreonine. S321 bears the Phosphoserine mark.

The protein belongs to the MIP/aquaporin (TC 1.A.8) family. In terms of assembly, homotetramer. The tetramers can form oligomeric arrays in membranes. The size of the oligomers differs between tissues and is smaller in skeletal muscle than in brain. Interaction between AQP4 oligomeric arrays in close-by cells can contribute to cell-cell adhesion. Part of a complex containing MLC1, TRPV4, HEPACAM and ATP1B1. Post-translationally, phosphorylation by PKC at Ser-180 promotes internalization from the cell membrane, reducing the conductance by 50%. Phosphorylation by PKG at Ser-111 in response to glutamate increases conductance by 40%. Isoform Long: Palmitoylated on its N-terminal region. Isoform 3: Not palmitoylated. As to expression, detected in cerebellum. Detected on pericapillary astrocyte endfeet in cerebellum, and in skeletal muscle. Detected in glial lamellae in the hypothalamus (at protein level). Abundant in mature brain cortex, cerebellum and spinal cord. Highly expressed in the ependymal cell lining the aqueductal system and over the space of the brain in contact with the subarachnoid space. Detected in paraventricular and supraoptic nuclei, the granule cell layer of the dentate gyrus and the Purkinje cell layer in the cerebellum. Only weakly detectable in eye, kidney, intestine, and lung.

The protein localises to the cell membrane. The protein resides in the basolateral cell membrane. Its subcellular location is the endosome membrane. It localises to the sarcolemma. It is found in the cell projection. It catalyses the reaction H2O(in) = H2O(out). In terms of biological role, forms a water-specific channel. Plays an important role in brain water homeostasis and in glymphatic solute transport. Required for a normal rate of water exchange across the blood brain interface. Required for normal levels of cerebrospinal fluid influx into the brain cortex and parenchyma along paravascular spaces that surround penetrating arteries, and for normal drainage of interstitial fluid along paravenous drainage pathways. Thereby, it is required for normal clearance of solutes from the brain interstitial fluid, including soluble beta-amyloid peptides derived from APP. Plays a redundant role in urinary water homeostasis and urinary concentrating ability. This chain is Aquaporin-4 (Aqp4), found in Rattus norvegicus (Rat).